Reading from the N-terminus, the 152-residue chain is Aspartate carbamoyltransferase regulatory chain (152 aa).

Zn(2+) is bound by residues cysteine 109, cysteine 114, cysteine 138, and cysteine 141.

Belongs to the PyrI family. In terms of assembly, contains catalytic and regulatory chains. The cofactor is Zn(2+).

Involved in allosteric regulation of aspartate carbamoyltransferase. The protein is Aspartate carbamoyltransferase regulatory chain of Proteus mirabilis (strain HI4320).